Here is a 204-residue protein sequence, read N- to C-terminus: Probable nicotinate-nucleotide adenylyltransferase (204 aa).

The protein belongs to the NadD family.

It carries out the reaction nicotinate beta-D-ribonucleotide + ATP + H(+) = deamido-NAD(+) + diphosphate. It functions in the pathway cofactor biosynthesis; NAD(+) biosynthesis; deamido-NAD(+) from nicotinate D-ribonucleotide: step 1/1. In terms of biological role, catalyzes the reversible adenylation of nicotinate mononucleotide (NaMN) to nicotinic acid adenine dinucleotide (NaAD). This is Probable nicotinate-nucleotide adenylyltransferase from Mycolicibacterium gilvum (strain PYR-GCK) (Mycobacterium gilvum (strain PYR-GCK)).